Consider the following 102-residue polypeptide: Putative lipid-transfer protein DIR1 (102 aa).

The first 25 residues, Met1–Val25, serve as a signal peptide directing secretion. Disulfide bonds link Cys30/Cys67, Cys40/Cys56, Cys57/Cys94, and Cys69/Cys102. An a 1-acyl-sn-glycero-3-phosphocholine-binding site is contributed by Gln34. Glu36 contacts Zn(2+). Asn38 contacts a 1-acyl-sn-glycero-3-phosphocholine. A Zn(2+)-binding site is contributed by His62.

This sequence belongs to the A9/FIL1 family. Self-interacts and binds to AZI1. Does not interact with PDLP1. Zn(2+) serves as cofactor.

The protein resides in the secreted. The protein localises to the extracellular space. Its subcellular location is the apoplast. It is found in the endoplasmic reticulum. It localises to the cell junction. The protein resides in the plasmodesma. Functionally, putative lipid transfer protein required for systemic acquired resistance (SAR) long distance signaling. May interact with a lipid-derived molecule to promote long distance signaling associated with SAR. Together with AZI1, required for glycerol-3-phosphate- (G3P) and azelaic acid- (AA) induced systemic acquired resistance (SAR). Component of plant systemic immunity involved in priming defenses in a AA-dependent manner, by modulating production and/or translocation of a mobile signal(s) during SAR. Is able to bind with high affinity monoacylated phospholipids, mainly lysophosphatidylcholines. The polypeptide is Putative lipid-transfer protein DIR1 (DIR1) (Arabidopsis thaliana (Mouse-ear cress)).